The sequence spans 236 residues: Phosphoribosylaminoimidazole-succinocarboxamide synthase (236 aa).

It belongs to the SAICAR synthetase family.

The catalysed reaction is 5-amino-1-(5-phospho-D-ribosyl)imidazole-4-carboxylate + L-aspartate + ATP = (2S)-2-[5-amino-1-(5-phospho-beta-D-ribosyl)imidazole-4-carboxamido]succinate + ADP + phosphate + 2 H(+). It participates in purine metabolism; IMP biosynthesis via de novo pathway; 5-amino-1-(5-phospho-D-ribosyl)imidazole-4-carboxamide from 5-amino-1-(5-phospho-D-ribosyl)imidazole-4-carboxylate: step 1/2. The chain is Phosphoribosylaminoimidazole-succinocarboxamide synthase from Campylobacter jejuni subsp. jejuni serotype O:2 (strain ATCC 700819 / NCTC 11168).